The primary structure comprises 96 residues: Large ribosomal subunit protein bL25 (96 aa).

It belongs to the bacterial ribosomal protein bL25 family. As to quaternary structure, part of the 50S ribosomal subunit; part of the 5S rRNA/L5/L18/L25 subcomplex. Contacts the 5S rRNA. Binds to the 5S rRNA independently of L5 and L18.

This is one of the proteins that binds to the 5S RNA in the ribosome where it forms part of the central protuberance. The sequence is that of Large ribosomal subunit protein bL25 from Francisella philomiragia subsp. philomiragia (strain ATCC 25017 / CCUG 19701 / FSC 153 / O#319-036).